We begin with the raw amino-acid sequence, 287 residues long: MDPKQTTLLCLVLCLGQRIQAQEGDFPMPFISAKSSPVIPLDGSVKIQCQAIREAYLTQLMIIKNSTYREIGRRLKFWNETDPEFVIDHMDANKAGRYQCQYRIGHYRFRYSDTLELVVTGLYGKPFLSADRGLVLMPGENISLTCSSAHIPFDRFSLAKEGELSLPQHQSGEHPANFSLGPVDLNVSGIYRCYGWYNRSPYLWSFPSNALELVVTDSIHQDYTTQNLIRMAVAGLVLVALLAILVENWHSHTALNKEASADVAEPSWSQQMCQPGLTFARTPSVCK.

The N-terminal stretch at 1–21 (MDPKQTTLLCLVLCLGQRIQA) is a signal peptide. Residues 22–227 (QEGDFPMPFI…SIHQDYTTQN (206 aa)) are Extracellular-facing. 2 Ig-like C2-type domains span residues 42 to 107 (DGSV…IGHY) and 139 to 200 (GENI…YNRS). A disulfide bridge links Cys49 with Cys100. Asn65, Asn79, Asn141, Asn177, and Asn186 each carry an N-linked (GlcNAc...) asparagine glycan. An intrachain disulfide couples Cys146 to Cys193. A helical membrane pass occupies residues 228–246 (LIRMAVAGLVLVALLAILV). Over 247–287 (ENWHSHTALNKEASADVAEPSWSQQMCQPGLTFARTPSVCK) the chain is Cytoplasmic.

As to quaternary structure, associates with the Fc epsilon RI gamma 2 receptor inducing tyrosine phosphorylation of gamma 2. (Microbial infection) Interacts with Staphylococcus aureus protein SSL11. In terms of tissue distribution, isoform A.1, isoform A.2 and isoform A.3 are differentially expressed between blood and mucosal myeloid cells. Isoform A.1, isoform A.2 and isoform A.3 are expressed in monocytes. Isoform A.1 and isoform A.2 are expressed in alveolar macrophages; however only one isoform is expressed at alveolar macrophages surfaces.

The protein resides in the cell membrane. Its subcellular location is the secreted. In terms of biological role, binds to the Fc region of immunoglobulins alpha. Mediates several functions including cytokine production. This is Immunoglobulin alpha Fc receptor (FCAR) from Homo sapiens (Human).